The sequence spans 250 residues: Hydroxyacylglutathione hydrolase (250 aa).

Residues His-53, His-55, Asp-57, His-58, His-110, Asp-127, and His-165 each coordinate Zn(2+).

This sequence belongs to the metallo-beta-lactamase superfamily. Glyoxalase II family. In terms of assembly, monomer. It depends on Zn(2+) as a cofactor.

The enzyme catalyses an S-(2-hydroxyacyl)glutathione + H2O = a 2-hydroxy carboxylate + glutathione + H(+). The protein operates within secondary metabolite metabolism; methylglyoxal degradation; (R)-lactate from methylglyoxal: step 2/2. Its function is as follows. Thiolesterase that catalyzes the hydrolysis of S-D-lactoyl-glutathione to form glutathione and D-lactic acid. The polypeptide is Hydroxyacylglutathione hydrolase (Photorhabdus laumondii subsp. laumondii (strain DSM 15139 / CIP 105565 / TT01) (Photorhabdus luminescens subsp. laumondii)).